Reading from the N-terminus, the 119-residue chain is Movement protein TGB2 (119 aa).

Residues 1–13 are Cytoplasmic-facing; that stretch reads MVRNNEIGARPNK. Residues 14–34 traverse the membrane as a helical segment; sequence YWPVVAAVVAICLFGFLTVTN. Residues 35 to 79 lie on the Lumenal side of the membrane; it reads QKHATQSGDNIHKFANGGQYRDGSKSIKYNCNNPRAYNGSSSNIT. Residues 80 to 100 traverse the membrane as a helical segment; sequence FSQLFLPVLLIGAALYAYLWF. At 101–119 the chain is on the cytoplasmic side; the sequence is TRPDCSVTCRGDCCRSYGG.

Belongs to the virgaviridae/benyvirus TGB2 movement protein family. Interacts with movement protein TGB3. TGB1-TGB3-TGB2 complex formation is enhanced by ATP hydrolysis.

It localises to the host cell junction. The protein resides in the host plasmodesma. It is found in the host endoplasmic reticulum membrane. Its subcellular location is the host cytoplasm. The protein localises to the host cytoskeleton. It localises to the host chloroplast envelope. Its function is as follows. Participates in the transport of viral genome to neighboring plant cells directly through plasmodesmata, without any budding. TGBp2 and TGBp3 are necessary for intracellular delivery of TGBp1-containing vRNPs to plasmodesmata. Can gate plasmodesmata and increase their size exclusion limit. To a lesser extent than TGB3, induces host actin cytoskeleton network thickening, which probably plays a major role in virus cell-to-cell movement. Binds ssRNA in a sequence non-specific manner. The chain is Movement protein TGB2 from Potato mop-top virus (isolate Potato/Sweden/Sw) (PMTV).